The chain runs to 962 residues: Protease 3 (962 aa).

The N-terminal stretch at 1-23 (MPRSTWFKALLLLVALWGPAVQA) is a signal peptide. His-88 serves as a coordination point for Zn(2+). The active-site Proton acceptor is the Glu-91. His-92 and Glu-169 together coordinate Zn(2+).

It belongs to the peptidase M16 family. In terms of assembly, monomer. It depends on Zn(2+) as a cofactor.

It localises to the periplasm. The enzyme catalyses Preferential cleavage of 16-Tyr-|-Leu-17 and 25-Phe-|-Tyr-26 bonds of oxidized insulin B chain. Also acts on other substrates of Mw less than 7 kDa such as insulin and glucagon.. Functionally, endopeptidase that degrades small peptides of less than 7 kDa, such as glucagon and insulin. In Salmonella typhi, this protein is Protease 3 (ptrA).